We begin with the raw amino-acid sequence, 76 residues long: Exodeoxyribonuclease 7 small subunit (76 aa).

It belongs to the XseB family. As to quaternary structure, heterooligomer composed of large and small subunits.

The protein localises to the cytoplasm. It catalyses the reaction Exonucleolytic cleavage in either 5'- to 3'- or 3'- to 5'-direction to yield nucleoside 5'-phosphates.. Its function is as follows. Bidirectionally degrades single-stranded DNA into large acid-insoluble oligonucleotides, which are then degraded further into small acid-soluble oligonucleotides. The polypeptide is Exodeoxyribonuclease 7 small subunit (Lactiplantibacillus plantarum (strain ATCC BAA-793 / NCIMB 8826 / WCFS1) (Lactobacillus plantarum)).